Consider the following 211-residue polypeptide: Uridine kinase (211 aa).

12-19 (GGSGSGKT) contributes to the ATP binding site.

This sequence belongs to the uridine kinase family.

The protein localises to the cytoplasm. It carries out the reaction uridine + ATP = UMP + ADP + H(+). The catalysed reaction is cytidine + ATP = CMP + ADP + H(+). Its pathway is pyrimidine metabolism; CTP biosynthesis via salvage pathway; CTP from cytidine: step 1/3. It participates in pyrimidine metabolism; UMP biosynthesis via salvage pathway; UMP from uridine: step 1/1. The protein is Uridine kinase (udk) of Bacillus subtilis (strain 168).